A 154-amino-acid polypeptide reads, in one-letter code: Protein X (154 aa).

The interval 68-117 (PCALRFTSARRMETTVNAPQSLPTTLHKRTLGLSPRSTTWIEEYIKDCVF) is mitochondrial targeting sequence.

The protein belongs to the orthohepadnavirus protein X family. May form homodimer. May interact with host CEBPA, CFLAR, CREB1, DDB1, E4F1, HBXIP, HSPD1/HSP60, NFKBIA, POLR2E and SMAD4. Interacts with host SMC5-SMC6 complex and induces its degradation. Interacts with host TRPC4AP; leading to prevent ubiquitination of TRPC4AP. Interacts with host PLSCR1; this interaction promotes ubiquitination and degradation of HBx and impairs HBx-mediated cell proliferation. A fraction may be phosphorylated in insect cells and HepG2 cells, a human hepatoblastoma cell line. Phosphorylated in vitro by host protein kinase C or mitogen-activated protein kinase. N-acetylated in insect cells.

It localises to the host cytoplasm. The protein resides in the host nucleus. The protein localises to the host mitochondrion. Functionally, multifunctional protein that plays a role in silencing host antiviral defenses and promoting viral transcription. Does not seem to be essential for HBV infection. May be directly involved in development of cirrhosis and liver cancer (hepatocellular carcinoma). Most of cytosolic activities involve modulation of cytosolic calcium. The effect on apoptosis is controversial depending on the cell types in which the studies have been conducted. May induce apoptosis by localizing in mitochondria and causing loss of mitochondrial membrane potential. May also modulate apoptosis by binding host CFLAR, a key regulator of the death-inducing signaling complex (DISC). Promotes viral transcription by using the host E3 ubiquitin ligase DDB1 to target the SMC5-SMC6 complex to proteasomal degradation. This host complex would otherwise bind to viral episomal DNA, and prevents its transcription. Moderately stimulates transcription of many different viral and cellular transcription elements. Promoters and enhancers stimulated by HBx contain DNA binding sites for NF-kappa-B, AP-1, AP-2, c-EBP, ATF/CREB, or the calcium-activated factor NF-AT. The polypeptide is Protein X (Hepatitis B virus genotype H subtype adw4 (isolate Nicaragua/2928Nic/1997) (HBV-H)).